The primary structure comprises 316 residues: RING finger protein 148 (316 aa).

An N-terminal signal peptide occupies residues 1 to 12 (MLLCVSCLSVNG). N-linked (GlcNAc...) asparagine glycosylation occurs at Asn56. The PA domain maps to 84–178 (VSGAVVLPEG…GNLKGMELLH (95 aa)). 2 helical membrane-spanning segments follow: residues 173–193 (GMELLHLIQQGVYVTIIIEVG) and 204–224 (VMSLFTFLAATVTYLFLYCAW). Residues 269–310 (CVVCFDMYKAQDVIRILTCKHFFHKTCIDPWLLAHRTCPMCK) form an RING-type; atypical zinc finger.

The protein localises to the membrane. The polypeptide is RING finger protein 148 (Rnf148) (Mus musculus (Mouse)).